A 210-amino-acid polypeptide reads, in one-letter code: Pyridoxine/pyridoxamine 5'-phosphate oxidase (210 aa).

Substrate contacts are provided by residues 7–10 and Lys-65; that span reads RDEY. FMN is bound by residues 60 to 65, 75 to 76, Arg-81, Lys-82, and Gln-104; these read RMVLLK and FT. 3 residues coordinate substrate: Tyr-122, Arg-126, and Ser-130. Residues 139-140 and Trp-183 contribute to the FMN site; that span reads QS. 189 to 191 provides a ligand contact to substrate; that stretch reads RLH. FMN is bound at residue Arg-193.

It belongs to the pyridoxamine 5'-phosphate oxidase family. In terms of assembly, homodimer. FMN serves as cofactor.

It carries out the reaction pyridoxamine 5'-phosphate + O2 + H2O = pyridoxal 5'-phosphate + H2O2 + NH4(+). The enzyme catalyses pyridoxine 5'-phosphate + O2 = pyridoxal 5'-phosphate + H2O2. The protein operates within cofactor metabolism; pyridoxal 5'-phosphate salvage; pyridoxal 5'-phosphate from pyridoxamine 5'-phosphate: step 1/1. It functions in the pathway cofactor metabolism; pyridoxal 5'-phosphate salvage; pyridoxal 5'-phosphate from pyridoxine 5'-phosphate: step 1/1. In terms of biological role, catalyzes the oxidation of either pyridoxine 5'-phosphate (PNP) or pyridoxamine 5'-phosphate (PMP) into pyridoxal 5'-phosphate (PLP). In Haemophilus influenzae (strain ATCC 51907 / DSM 11121 / KW20 / Rd), this protein is Pyridoxine/pyridoxamine 5'-phosphate oxidase.